A 435-amino-acid polypeptide reads, in one-letter code: Citrate synthase (435 aa).

Active-site residues include histidine 311 and aspartate 370.

This sequence belongs to the citrate synthase family.

It carries out the reaction oxaloacetate + acetyl-CoA + H2O = citrate + CoA + H(+). It participates in carbohydrate metabolism; tricarboxylic acid cycle; isocitrate from oxaloacetate: step 1/2. The protein is Citrate synthase (gltA) of Rickettsia bellii (strain RML369-C).